The following is a 170-amino-acid chain: Arginine repressor (170 aa).

Belongs to the ArgR family.

The protein resides in the cytoplasm. Its pathway is amino-acid biosynthesis; L-arginine biosynthesis [regulation]. Functionally, regulates arginine biosynthesis genes. The polypeptide is Arginine repressor (Mycobacterium tuberculosis (strain ATCC 25177 / H37Ra)).